Consider the following 225-residue polypeptide: Redox-sensing transcriptional repressor Rex (225 aa).

Residues 16–55 constitute a DNA-binding region (H-T-H motif); that stretch reads IYYRYLNILLDADKKRVSSTELSEAVKVDSATIRRDFSYF. 90–95 is a binding site for NAD(+); that stretch reads GVGNLG.

It belongs to the transcriptional regulatory Rex family. In terms of assembly, homodimer.

The protein resides in the cytoplasm. Modulates transcription in response to changes in cellular NADH/NAD(+) redox state. The polypeptide is Redox-sensing transcriptional repressor Rex (Lactiplantibacillus plantarum (strain ATCC BAA-793 / NCIMB 8826 / WCFS1) (Lactobacillus plantarum)).